The following is a 547-amino-acid chain: Inositol 1,4,5-trisphosphate receptor-interacting protein-like 1 (547 aa).

The signal sequence occupies residues 1–22 (MAVISLMFLAVMYVVHHPLMVS). Over 23-96 (DRMDLDTLAR…PFQAGGQDGG (74 aa)) the chain is Extracellular. Positions 28-66 (DTLARSRQLEKRMSEEMRQLEMEFEERSRAAEQKQKVEN) form a coiled coil. A helical transmembrane segment spans residues 97-117 (PLGWILGNLWNAGLFCLFLIF). At 118 to 547 (ELLRQSMQHE…LPCSPVAGGL (430 aa)) the chain is on the cytoplasmic side.

This sequence belongs to the ITPRIP family.

Its subcellular location is the cell membrane. In terms of biological role, functions as a ligand of CD3E, inhibiting TCR-CD3 complex signaling to regulate T cell activation. Induces stable CD3E-NCK1 binding, thereby preventing the CD3E-ZAP70 interaction and subsequently inhibiting the activation of the downstream ERK-NFkB signaling cascade and calcium influx. This chain is Inositol 1,4,5-trisphosphate receptor-interacting protein-like 1 (Itpripl1), found in Mus musculus (Mouse).